The sequence spans 309 residues: Probable RuBisCO transcriptional regulator (309 aa).

Residues 6–63 form the HTH lysR-type domain; that stretch reads FTLDQLRILKAIVKEGSFKRAADSLYVSQPAISLQIQNLEKQLNIPLFERSNKKATLT. Positions 23-42 form a DNA-binding region, H-T-H motif; it reads FKRAADSLYVSQPAISLQIQ.

It belongs to the LysR transcriptional regulatory family.

It is found in the plastid. Its subcellular location is the chloroplast. In terms of biological role, trans-acting transcriptional regulator of RuBisCO genes (rbcL and rbcS) expression. The chain is Probable RuBisCO transcriptional regulator (rbcR) from Gracilaria tenuistipitata var. liui (Red alga).